The chain runs to 149 residues: Protein FAM72A (149 aa).

Belongs to the FAM72 family. Interacts with UNG. As to expression, expressed at high levels in stomach and also in kidney and, at low levels, in heart (at protein level). In the stomach, highly expressed in foveolar cells, parietal cells and chief cells (at protein level). In kidney, expressed in endothelial cells, mesangial and epithelial cells (parietal and visceral epithelium) around glomerulus (at protein level).

It localises to the cytoplasm. The protein localises to the mitochondrion. Functionally, may play a role in the regulation of cellular reactive oxygen species metabolism. May participate in cell growth regulation. The chain is Protein FAM72A (FAM72A) from Bos taurus (Bovine).